We begin with the raw amino-acid sequence, 133 residues long: Probable non-specific lipid-transfer protein 2 (133 aa).

The first 31 residues, 1 to 31, serve as a signal peptide directing secretion; the sequence is MRTVSMAALVVIAAALAWTSSAELASAPAPG. Cystine bridges form between C35–C83, C45–C60, C61–C106, and C81–C121.

Belongs to the plant LTP family.

Functionally, plant non-specific lipid-transfer proteins transfer phospholipids as well as galactolipids across membranes. May play a role in wax or cutin deposition in the cell walls of expanding epidermal cells and certain secretory tissues. The chain is Probable non-specific lipid-transfer protein 2 from Parietaria judaica (Pellitory-of-the-wall).